A 291-amino-acid chain; its full sequence is 33 kDa chaperonin (291 aa).

2 cysteine pairs are disulfide-bonded: cysteine 235-cysteine 237 and cysteine 268-cysteine 271.

The protein belongs to the HSP33 family. In terms of processing, under oxidizing conditions two disulfide bonds are formed involving the reactive cysteines. Under reducing conditions zinc is bound to the reactive cysteines and the protein is inactive.

It localises to the cytoplasm. Functionally, redox regulated molecular chaperone. Protects both thermally unfolding and oxidatively damaged proteins from irreversible aggregation. Plays an important role in the bacterial defense system toward oxidative stress. This Streptococcus agalactiae serotype Ia (strain ATCC 27591 / A909 / CDC SS700) protein is 33 kDa chaperonin.